Reading from the N-terminus, the 185-residue chain is Large ribosomal subunit protein uL5 (185 aa).

It belongs to the universal ribosomal protein uL5 family. Part of the 50S ribosomal subunit; part of the 5S rRNA/L5/L18/L25 subcomplex. Contacts the 5S rRNA and the P site tRNA. Forms a bridge to the 30S subunit in the 70S ribosome.

Its function is as follows. This is one of the proteins that bind and probably mediate the attachment of the 5S RNA into the large ribosomal subunit, where it forms part of the central protuberance. In the 70S ribosome it contacts protein S13 of the 30S subunit (bridge B1b), connecting the 2 subunits; this bridge is implicated in subunit movement. Contacts the P site tRNA; the 5S rRNA and some of its associated proteins might help stabilize positioning of ribosome-bound tRNAs. The polypeptide is Large ribosomal subunit protein uL5 (Bartonella henselae (strain ATCC 49882 / DSM 28221 / CCUG 30454 / Houston 1) (Rochalimaea henselae)).